The chain runs to 300 residues: Dipeptide transport system permease protein DppC (300 aa).

The Cytoplasmic portion of the chain corresponds to 1–31 (MSQVTENKVISAPVPMTPLQEFWHYFKRNKG). Residues 32–52 (AVVGLVYVVIVLFIAIFANWI) form a helical membrane-spanning segment. Residues 53-101 (APYNPAEQFRDALLAPPAWQEGGSMAHLLGTDDVGRDVLSRLMYGARLS) lie on the Periplasmic side of the membrane. Residues 98 to 287 (ARLSLLVGCL…LTVLAFNLMG (190 aa)) enclose the ABC transmembrane type-1 domain. Residues 102 to 122 (LLVGCLVVVLSLIMGVILGLI) form a helical membrane-spanning segment. The Cytoplasmic segment spans residues 123–136 (AGYFGGLVDNIIMR). A helical transmembrane segment spans residues 137 to 157 (VVDIMLALPSLLLALVLVAIF). Topologically, residues 158–206 (GPSIGNAALALTFVALPHYVRLTRAAVLVEVNRDYVTASRVAGAGAMRQ) are periplasmic. A helical membrane pass occupies residues 207-227 (MFINIFPNCLAPLIVQASLGF). Residues 228 to 230 (SNA) lie on the Cytoplasmic side of the membrane. Residues 231 to 251 (ILDMAALGFLGMGAQPPTPEW) form a helical membrane-spanning segment. Residues 252–265 (GTMLSDVLQFAQSA) lie on the Periplasmic side of the membrane. The helical transmembrane segment at 266 to 286 (WWVVTFPGLAILLTVLAFNLM) threads the bilayer. The Cytoplasmic portion of the chain corresponds to 287–300 (GDGLRDALDPKLKQ).

This sequence belongs to the binding-protein-dependent transport system permease family. OppBC subfamily. As to quaternary structure, the complex is composed of two ATP-binding proteins (DppD and DppF), two transmembrane proteins (DppB and DppC) and a solute-binding protein (DppA).

Its subcellular location is the cell inner membrane. Part of the ABC transporter DppABCDF involved in dipeptide transport. Responsible for the translocation of the substrate across the membrane. This Escherichia coli O157:H7 protein is Dipeptide transport system permease protein DppC (dppC).